A 217-amino-acid polypeptide reads, in one-letter code: MEHSSWHALIKAQLPEGYFGKINQFMNQVYVQGTVYPPKEKVFQALLTTPLEEVKVVILGQDPYHGPGQAQGLSFSVPDSIPAPPSLQNILKELSDDLGVKKSHDLTAWAEQGVLLLNACLTVPAGQANGHAGQIWEPFTDAVIQVVNHLDRPVVFVLWGAYARKKKALVTNPHHLIIESAHPSPLSVYRGFWGSKPFSKANAFLKETGQEPIDWLR.

Residue D62 is the Proton acceptor of the active site.

The protein belongs to the uracil-DNA glycosylase (UDG) superfamily. UNG family.

It is found in the cytoplasm. The catalysed reaction is Hydrolyzes single-stranded DNA or mismatched double-stranded DNA and polynucleotides, releasing free uracil.. Its function is as follows. Excises uracil residues from the DNA which can arise as a result of misincorporation of dUMP residues by DNA polymerase or due to deamination of cytosine. The sequence is that of Uracil-DNA glycosylase from Streptococcus pneumoniae (strain Hungary19A-6).